We begin with the raw amino-acid sequence, 179 residues long: Ribosome maturation factor RimM (179 aa).

The PRC barrel domain occupies 100-176 (KEEFHLLELI…FLIINPPNGL (77 aa)).

This sequence belongs to the RimM family. As to quaternary structure, binds ribosomal protein uS19.

The protein resides in the cytoplasm. Its function is as follows. An accessory protein needed during the final step in the assembly of 30S ribosomal subunit, possibly for assembly of the head region. Essential for efficient processing of 16S rRNA. May be needed both before and after RbfA during the maturation of 16S rRNA. It has affinity for free ribosomal 30S subunits but not for 70S ribosomes. The protein is Ribosome maturation factor RimM of Prochlorococcus marinus (strain AS9601).